Reading from the N-terminus, the 516-residue chain is GMP synthase [glutamine-hydrolyzing] (516 aa).

The Glutamine amidotransferase type-1 domain occupies 7 to 199 (KIIILDFGSQ…VFGLCKCQAT (193 aa)). Cysteine 84 functions as the Nucleophile in the catalytic mechanism. Catalysis depends on residues histidine 173 and glutamate 175. A GMPS ATP-PPase domain is found at 200–391 (WTMQGFIESN…LGLPDEAVHR (192 aa)). 227–233 (SGGVDSS) contacts ATP.

In terms of assembly, homodimer.

The enzyme catalyses XMP + L-glutamine + ATP + H2O = GMP + L-glutamate + AMP + diphosphate + 2 H(+). Its pathway is purine metabolism; GMP biosynthesis; GMP from XMP (L-Gln route): step 1/1. Its function is as follows. Catalyzes the synthesis of GMP from XMP. This is GMP synthase [glutamine-hydrolyzing] from Desulfotalea psychrophila (strain LSv54 / DSM 12343).